The sequence spans 579 residues: Aspartate--tRNA(Asp/Asn) ligase (579 aa).

Residue glutamate 171 coordinates L-aspartate. The segment at 195–198 (QLFK) is aspartate. Residue arginine 217 coordinates L-aspartate. Residues 217 to 219 (RDE) and glutamine 226 each bind ATP. Residue histidine 444 participates in L-aspartate binding. Glutamate 475 contacts ATP. Arginine 482 is an L-aspartate binding site. 527–530 (GLDR) contributes to the ATP binding site.

Belongs to the class-II aminoacyl-tRNA synthetase family. Type 1 subfamily. As to quaternary structure, homodimer.

Its subcellular location is the cytoplasm. The enzyme catalyses tRNA(Asx) + L-aspartate + ATP = L-aspartyl-tRNA(Asx) + AMP + diphosphate. Aspartyl-tRNA synthetase with relaxed tRNA specificity since it is able to aspartylate not only its cognate tRNA(Asp) but also tRNA(Asn). Reaction proceeds in two steps: L-aspartate is first activated by ATP to form Asp-AMP and then transferred to the acceptor end of tRNA(Asp/Asn). This Thermotoga maritima (strain ATCC 43589 / DSM 3109 / JCM 10099 / NBRC 100826 / MSB8) protein is Aspartate--tRNA(Asp/Asn) ligase.